Here is an 885-residue protein sequence, read N- to C-terminus: Cadherin-related family member 3 (885 aa).

The first 19 residues, 1–19, serve as a signal peptide directing secretion; sequence MQEAIILLALLGAMSGGEA. At 20–713 the chain is on the extracellular side; it reads LHLILLPATG…VYSPSAWYVP (694 aa). Cadherin domains follow at residues 23-132, 136-236, 237-344, 346-466, 462-566, and 567-695; these read ILLP…PPQF, LAEG…VPRF, TSPT…NPAT, QKFT…RPSY, DRPS…KPIC, and TPNS…RPRV. N-linked (GlcNAc...) asparagine glycans are attached at residues Asn186 and Asn257. N-linked (GlcNAc...) asparagine glycosylation occurs at Asn624. A helical membrane pass occupies residues 714–734; sequence FVITLGSILLLGLLVYLVVLL. At 735–885 the chain is on the cytoplasmic side; the sequence is AKAIHRHCPC…RAYPKPHPGK (151 aa). The disordered stretch occupies residues 808 to 885; that stretch reads MPKWKESSHQ…RAYPKPHPGK (78 aa).

(Microbial infection) Interacts (via N-terminus) with human rhinovirus C capsid proteins VP1, VP2 and VP3. Expressed in bronchial epithelium from adults and in fetal lung tissue.

The protein resides in the cell membrane. Cadherins are calcium-dependent cell adhesion proteins. They preferentially interact with themselves in a homophilic manner in connecting cells; cadherins may thus contribute to the sorting of heterogeneous cell types. Its function is as follows. (Microbial infection) Acts as a receptor for human rhinovirus C. The polypeptide is Cadherin-related family member 3 (CDHR3) (Homo sapiens (Human)).